Reading from the N-terminus, the 271-residue chain is Formamidopyrimidine-DNA glycosylase (271 aa).

The active-site Schiff-base intermediate with DNA is Pro2. Glu3 acts as the Proton donor in catalysis. Lys58 serves as the catalytic Proton donor; for beta-elimination activity. DNA contacts are provided by His91, Arg110, and Arg152. An FPG-type zinc finger spans residues 237–271 (SVYGRNDAPCPGCGAPIRRSRQGGRSTYFCDRCQH). The active-site Proton donor; for delta-elimination activity is the Arg261.

The protein belongs to the FPG family. Monomer. Requires Zn(2+) as cofactor.

It carries out the reaction Hydrolysis of DNA containing ring-opened 7-methylguanine residues, releasing 2,6-diamino-4-hydroxy-5-(N-methyl)formamidopyrimidine.. The catalysed reaction is 2'-deoxyribonucleotide-(2'-deoxyribose 5'-phosphate)-2'-deoxyribonucleotide-DNA = a 3'-end 2'-deoxyribonucleotide-(2,3-dehydro-2,3-deoxyribose 5'-phosphate)-DNA + a 5'-end 5'-phospho-2'-deoxyribonucleoside-DNA + H(+). Its function is as follows. Involved in base excision repair of DNA damaged by oxidation or by mutagenic agents. Acts as a DNA glycosylase that recognizes and removes damaged bases. Has a preference for oxidized purines, such as 7,8-dihydro-8-oxoguanine (8-oxoG). Has AP (apurinic/apyrimidinic) lyase activity and introduces nicks in the DNA strand. Cleaves the DNA backbone by beta-delta elimination to generate a single-strand break at the site of the removed base with both 3'- and 5'-phosphates. The chain is Formamidopyrimidine-DNA glycosylase from Geotalea uraniireducens (strain Rf4) (Geobacter uraniireducens).